The following is a 529-amino-acid chain: Bifunctional purine biosynthesis protein PurH (529 aa).

An MGS-like domain is found at 1-148; the sequence is MQQRRPVRRA…KNHKDVAIVV (148 aa).

This sequence belongs to the PurH family.

The enzyme catalyses (6R)-10-formyltetrahydrofolate + 5-amino-1-(5-phospho-beta-D-ribosyl)imidazole-4-carboxamide = 5-formamido-1-(5-phospho-D-ribosyl)imidazole-4-carboxamide + (6S)-5,6,7,8-tetrahydrofolate. It catalyses the reaction IMP + H2O = 5-formamido-1-(5-phospho-D-ribosyl)imidazole-4-carboxamide. The protein operates within purine metabolism; IMP biosynthesis via de novo pathway; 5-formamido-1-(5-phospho-D-ribosyl)imidazole-4-carboxamide from 5-amino-1-(5-phospho-D-ribosyl)imidazole-4-carboxamide (10-formyl THF route): step 1/1. It functions in the pathway purine metabolism; IMP biosynthesis via de novo pathway; IMP from 5-formamido-1-(5-phospho-D-ribosyl)imidazole-4-carboxamide: step 1/1. The protein is Bifunctional purine biosynthesis protein PurH of Salmonella typhi.